Consider the following 555-residue polypeptide: Beta-caryophyllene synthase (555 aa).

Mg(2+)-binding residues include Asp-313, Asp-317, Asp-456, and Glu-464. The DDXXD motif motif lies at Asp-313–Asp-317.

The protein belongs to the terpene synthase family. Mg(2+) is required as a cofactor.

It catalyses the reaction (2E,6E)-farnesyl diphosphate = (+)-(E)-beta-caryophyllene + diphosphate. It participates in secondary metabolite biosynthesis; terpenoid biosynthesis. Functionally, sesquiterpene synthase converting farnesyl diphosphate to beta-caryophyllene as the major product. This chain is Beta-caryophyllene synthase, found in Phyla dulcis (Aztec sweet herb).